A 293-amino-acid chain; its full sequence is Epidermal growth factor-like protein 8 (293 aa).

The signal sequence occupies residues 1 to 28 (MGLWAELCISLRGLSFFLVLMTGEGTRG). The region spanning 34–112 (SLGVCSKQTL…PHPGALTCDA (79 aa)) is the EMI domain. Disulfide bonds link C38–C97, C65–C71, C96–C110, C114–C124, C118–C130, C132–C141, C148–C159, C155–C168, and C170–C183. The N-linked (GlcNAc...) asparagine glycan is linked to N50. The EGF-like 1 domain occupies 111–142 (DAICSKPCLNGGVCTGPDRCECAPGWGGKHCH). In terms of domain architecture, EGF-like 2; calcium-binding spans 144-184 (DVDECRASLTLCSHGCLNTLGSFLCSCPHPLVLGLDGRTCA). Residues 206 to 235 (SEEERALRWEVAELRGRLEKLEQWATQAGA) are a coiled coil.

Ubiquitously expressed in brain, kidney, thymus and lung.

It localises to the secreted. This is Epidermal growth factor-like protein 8 (Egfl8) from Mus musculus (Mouse).